We begin with the raw amino-acid sequence, 181 residues long: Adenine phosphoribosyltransferase (181 aa).

It belongs to the purine/pyrimidine phosphoribosyltransferase family. As to quaternary structure, homodimer.

Its subcellular location is the cytoplasm. It catalyses the reaction AMP + diphosphate = 5-phospho-alpha-D-ribose 1-diphosphate + adenine. It functions in the pathway purine metabolism; AMP biosynthesis via salvage pathway; AMP from adenine: step 1/1. Its function is as follows. Catalyzes a salvage reaction resulting in the formation of AMP, that is energically less costly than de novo synthesis. This chain is Adenine phosphoribosyltransferase, found in Methylobacterium nodulans (strain LMG 21967 / CNCM I-2342 / ORS 2060).